We begin with the raw amino-acid sequence, 760 residues long: Rho GTPase-activating protein 26 (760 aa).

The BAR domain maps to 7 to 262 (EFSECCLDSP…MKENPHEHKN (256 aa)). The region spanning 265 to 369 (PYTMEGYLYV…WMEAMDGREP (105 aa)) is the PH domain. The 186-residue stretch at 383–568 (AQLDSIGFSI…ILIENHEKIF (186 aa)) folds into the Rho-GAP domain. Disordered regions lie at residues 571–617 (VPET…ESRN) and 658–701 (PNRP…SPIS). The span at 605 to 617 (HTAQPNEKQESRN) shows a compositional bias: polar residues. The segment covering 674–701 (LSPSWPMFSAPSSPMPTSSTSSDSSPIS) has biased composition (low complexity). The 59-residue stretch at 702–760 (SPLRKARALYACKAEHDSELSFTAGTVFDNVHPSQEPGWLEGTLNGKTGLIPENYVEFL) folds into the SH3 domain.

In terms of assembly, binds to the C-terminus of PTK2/FAK1. In terms of tissue distribution, detected in embryonic brain and liver, and at low levels in embryonic eye, heart, lung, intestine and skeletal muscle.

Its subcellular location is the cell junction. The protein localises to the focal adhesion. The protein resides in the cytoplasm. It is found in the cytoskeleton. It localises to the endosome membrane. Functionally, GTPase-activating protein for RHOA and CDC42. May be involved in the regulation of neosynthesized protein export through a Rab-endososomal dependent export route. The polypeptide is Rho GTPase-activating protein 26 (ARHGAP26) (Gallus gallus (Chicken)).